Reading from the N-terminus, the 1909-residue chain is Endoribonuclease Dicer homolog 1 (1909 aa).

The disordered stretch occupies residues 99–177 (TVKENGLQKN…NNKKKRECNN (79 aa)). The segment covering 110–124 (GKRDEFSKEEGDKDR) has biased composition (basic and acidic residues). The span at 131 to 146 (SYQSERSNLSGRGHVN) shows a compositional bias: polar residues. A compositionally biased stretch (basic and acidic residues) spans 147-177 (NSREGDRFMNRKRTRNWDEAGNNKKKRECNN). The Helicase ATP-binding domain occupies 256–433 (VLEQAKAKNT…QVDCAIKIRN (178 aa)). Position 269–276 (269–276 (LETGAGKT)) interacts with ATP. The DECH box motif lies at 378–381 (DECH). The Helicase C-terminal domain occupies 651-812 (SLIKLLLKYQ…RTDLSHLKDT (162 aa)). The 96-residue stretch at 840 to 935 (AVGLVHFYCS…LPDKGSGQDA (96 aa)) folds into the Dicer dsRNA-binding fold domain. A disordered region spans residues 929–952 (KGSGQDAEKADQDDEGEPVPGTAR). Positions 1189 to 1318 (EVEEDLSKGK…LPPELCVVHP (130 aa)) constitute a PAZ domain. 2 consecutive RNase III domains span residues 1342-1518 (LAVQ…VEGG) and 1559-1707 (FVGL…LDSG). Glu-1597, Asp-1693, and Glu-1696 together coordinate Mg(2+). DRBM domains lie at 1733–1796 (HPVR…ALKE) and 1831–1906 (FTRQ…LLNK). The segment at 1801 to 1831 (ESKEKHINNGNAGEDQGENENGNKKNGHQPF) is disordered.

Belongs to the helicase family. Dicer subfamily. Interacts (via N-terminus) with DDL. Interacts (via DRBM domains) with DRB1, DRB2 and DRB5. May interact with AGO1 or AGO10 through their common PAZ domains. It depends on Mg(2+) as a cofactor. Mn(2+) serves as cofactor. As to expression, highly expressed in flowers and seeds and detected in leaves and stems. Found in ovule integuments, inflorescence and floral meristems, stigma of flowers until just before pollination, vasculature of the funiculus, and embryo.

Its subcellular location is the nucleus. Functionally, ribonuclease (RNase) III involved in RNA-mediated post-transcriptional gene silencing (PTGS). Functions in the microRNAs (miRNAs) biogenesis pathway by cleaving primary miRNAs (pri-miRNAs) and precursor miRNAs (pre-miRNAs). Functions with DRB1/HYL1 and SERRATE proteins for accurate pri-miRNAs to miRNAs processing. Indirectly involved in the production of trans-acting small interfering RNAs (ta-siRNAs) derived from the TAS1, TAS2 or TAS3 endogenous transcripts by participating in the production of their initiating miRNAs. Involved in the processing of natural siRNAs (nat-siRNAs, derived from cis-natural antisense transcripts) by cleaving 24 nucleotide nat-siRNAs into 21 nucleotide nat-siRNAs. Can produce RDR6-dependent endogenous ta-siRNAs derived from TAS1 and TAS2. Required for the production of 30-40 nucleotide bacterial-induced long siRNAs (lsiRNA). Acts redundantly with DICER-LIKE 3 (DCL3) to promote flowering via repression of FLOWERING LOCUS C (FLC). Represses antiviral RNA silencing through negative regulation of the expression of DCL4 and DCL3. The chain is Endoribonuclease Dicer homolog 1 (DCL1) from Arabidopsis thaliana (Mouse-ear cress).